The primary structure comprises 826 residues: Ribonucleoside-diphosphate reductase large subunit (826 aa).

Substrate is bound by residues Thr171, 186–187 (SC), Gly217, 387–391 (NLCAE), and 594–598 (PTSGC). A disulfide bond links Cys187 and Cys403. Catalysis depends on Asn387, which acts as the Proton acceptor. Cys389 acts as the Cysteine radical intermediate in catalysis. Catalysis depends on Glu391, which acts as the Proton acceptor.

The protein belongs to the ribonucleoside diphosphate reductase large chain family. Heterotetramer composed of a homodimer of the large subunit (R1) and a homodimer of the small subunit (R2). Larger multisubunit protein complex are also active, composed of (R1)n(R2)n.

The catalysed reaction is a 2'-deoxyribonucleoside 5'-diphosphate + [thioredoxin]-disulfide + H2O = a ribonucleoside 5'-diphosphate + [thioredoxin]-dithiol. Functionally, ribonucleoside-diphosphate reductase holoenzyme provides the precursors necessary for viral DNA synthesis. Allows virus growth in non-dividing cells, as well as reactivation from latency in infected hosts. Catalyzes the biosynthesis of deoxyribonucleotides from the corresponding ribonucleotides. This Epstein-Barr virus (strain GD1) (HHV-4) protein is Ribonucleoside-diphosphate reductase large subunit.